We begin with the raw amino-acid sequence, 719 residues long: DNA replication licensing factor MCM7 (719 aa).

At Ala-2 the chain carries N-acetylalanine. Residues Lys-15 and Lys-28 each participate in a glycyl lysine isopeptide (Lys-Gly) (interchain with G-Cter in SUMO2) cross-link. 2 positions are modified to phosphoserine: Ser-121 and Ser-314. Residues 332-538 (FYEKLAASIA…NDLRLAQHIT (207 aa)) enclose the MCM domain. An ATP-binding site is contributed by Tyr-345. Ser-365 is subject to Phosphoserine. The ATP site is built by Gly-384, Ala-386, Lys-387, Ser-388, and Asn-489. Ser-500 carries the post-translational modification Phosphoserine. The short motif at 513 to 516 (SRFD) is the Arginine finger element. Arg-514 is a binding site for ATP. Positions 521–564 (IQDRPDRDNDLRLAQHITYVHQHSRQPPAQFEPLDMKLMRRYIA) are interaction with RAD17. The tract at residues 577–719 (LADYITAAYV…NTARTRITFV (143 aa)) is interaction with ATRIP. Arg-604 contacts ATP. Phosphoserine is present on Ser-678.

The protein belongs to the MCM family. As to quaternary structure, component of the MCM2-7 complex. The complex forms a toroidal hexameric ring with the proposed subunit order MCM2-MCM6-MCM4-MCM7-MCM3-MCM5. Component of the CMG helicase complex, a hexameric ring of related MCM2-7 subunits stabilized by CDC45 and the tetrameric GINS complex. Interacts with the ATR-ATRIP complex and with RAD17. Interacts with TIPIN. Interacts with MCMBP. Interacts with ANKRD17. Component of the replisome complex composed of at least DONSON, MCM2, MCM7, PCNA and TICRR. O-glycosylated (O-GlcNAcylated), in a cell cycle-dependent manner. In terms of processing, ubiquitinated by ECS(LRR1) E3 ubiquitin-protein ligase complex when forks converge following formation of DNA interstrand cross-links. During mitosis, ubiquitinated by TRAIP when forks converge following formation of DNA interstrand cross-links. Short ubiquitin chains on MCM7 promote recruitment of DNA glycosylase NEIL3. If the interstrand cross-link cannot be cleaved by NEIL3, the ubiquitin chains continue to grow on MCM7, promoting the unloading of the CMG helicase complex by the VCP/p97 ATPase.

Its subcellular location is the nucleus. The protein localises to the chromosome. The enzyme catalyses ATP + H2O = ADP + phosphate + H(+). Acts as a component of the MCM2-7 complex (MCM complex) which is the replicative helicase essential for 'once per cell cycle' DNA replication initiation and elongation in eukaryotic cells. Core component of CDC45-MCM-GINS (CMG) helicase, the molecular machine that unwinds template DNA during replication, and around which the replisome is built. The active ATPase sites in the MCM2-7 ring are formed through the interaction surfaces of two neighboring subunits such that a critical structure of a conserved arginine finger motif is provided in trans relative to the ATP-binding site of the Walker A box of the adjacent subunit. The six ATPase active sites, however, are likely to contribute differentially to the complex helicase activity. Required for S-phase checkpoint activation upon UV-induced damage. The polypeptide is DNA replication licensing factor MCM7 (MCM7) (Bos taurus (Bovine)).